A 91-amino-acid chain; its full sequence is Acyl carrier protein (91 aa).

One can recognise a Carrier domain in the interval 6–81; sequence EEIIAELGQI…DIVAYIQKLE (76 aa). Ser41 is subject to O-(pantetheine 4'-phosphoryl)serine.

It belongs to the acyl carrier protein (ACP) family. In terms of processing, 4'-phosphopantetheine is transferred from CoA to a specific serine of apo-ACP by AcpS. This modification is essential for activity because fatty acids are bound in thioester linkage to the sulfhydryl of the prosthetic group.

It localises to the cytoplasm. It participates in lipid metabolism; fatty acid biosynthesis. Its function is as follows. Carrier of the growing fatty acid chain in fatty acid biosynthesis. The sequence is that of Acyl carrier protein from Rhodococcus erythropolis (strain PR4 / NBRC 100887).